Reading from the N-terminus, the 243-residue chain is Pyridoxine 5'-phosphate synthase (243 aa).

N9 contributes to the 3-amino-2-oxopropyl phosphate binding site. Residue 11–12 (DH) participates in 1-deoxy-D-xylulose 5-phosphate binding. R20 lines the 3-amino-2-oxopropyl phosphate pocket. Catalysis depends on H45, which acts as the Proton acceptor. R47 and H52 together coordinate 1-deoxy-D-xylulose 5-phosphate. Catalysis depends on E72, which acts as the Proton acceptor. T102 provides a ligand contact to 1-deoxy-D-xylulose 5-phosphate. H193 functions as the Proton donor in the catalytic mechanism. 3-amino-2-oxopropyl phosphate-binding positions include G194 and 215–216 (GH).

The protein belongs to the PNP synthase family. As to quaternary structure, homooctamer; tetramer of dimers.

Its subcellular location is the cytoplasm. The catalysed reaction is 3-amino-2-oxopropyl phosphate + 1-deoxy-D-xylulose 5-phosphate = pyridoxine 5'-phosphate + phosphate + 2 H2O + H(+). It functions in the pathway cofactor biosynthesis; pyridoxine 5'-phosphate biosynthesis; pyridoxine 5'-phosphate from D-erythrose 4-phosphate: step 5/5. In terms of biological role, catalyzes the complicated ring closure reaction between the two acyclic compounds 1-deoxy-D-xylulose-5-phosphate (DXP) and 3-amino-2-oxopropyl phosphate (1-amino-acetone-3-phosphate or AAP) to form pyridoxine 5'-phosphate (PNP) and inorganic phosphate. This is Pyridoxine 5'-phosphate synthase from Pectobacterium atrosepticum (strain SCRI 1043 / ATCC BAA-672) (Erwinia carotovora subsp. atroseptica).